We begin with the raw amino-acid sequence, 394 residues long: Phosphatidylinositol 4-phosphate 5-kinase-like protein 1 (394 aa).

In terms of domain architecture, PIPK spans 36–393 (DKQSRLGLFE…RLCQWVEAHT (358 aa)).

As to quaternary structure, heterodimerizes with other type I phosphatidylinositol 4-phosphate 5-kinase.

It is found in the cytoplasm. Its subcellular location is the membrane. The enzyme catalyses a 1,2-diacyl-sn-glycero-3-phospho-(1D-myo-inositol 4-phosphate) + ATP = a 1,2-diacyl-sn-glycero-3-phospho-(1D-myo-inositol-4,5-bisphosphate) + ADP + H(+). In terms of biological role, may act as a scaffold to localize and regulate type I PI(4)P 5-kinases to specific compartments within the cell, where they generate PI(4,5)P2 for actin nucleation, signaling and scaffold protein recruitment and conversion to PI(3,4,5)P3. This Homo sapiens (Human) protein is Phosphatidylinositol 4-phosphate 5-kinase-like protein 1 (PIP5KL1).